Reading from the N-terminus, the 147-residue chain is uncharacterized protein (147 aa).

Residues 44–147 (LVGYIDKEIH…LKSIKERLSI (104 aa)) enclose the HTH LytTR-type domain.

The protein localises to the cytoplasm. This is an uncharacterized protein from Staphylococcus aureus (strain MRSA252).